A 213-amino-acid chain; its full sequence is MSRVLVIESSARQRGSVSRLLTAEFISHWKIAHPADRFQVRDLAREPLPHLDELLLGAWTTPCDGHSAAERRALERSNRLTEELRMADVLVLAAPMYNFAIPSSLKSWFDHVLRAGLTFRYAEQGPEGLLQGKRAFVLTARGGIYAGGGLDHQEPYLRQVLGFVGIHDVTFIHAEGMNMGPEFREKGLARARERMRQALETDTSLCVPLPTLR.

FMN-binding positions include S10, 16-18 (SVS), and 96-99 (MYNF).

It belongs to the azoreductase type 1 family. Homodimer. Requires FMN as cofactor.

It catalyses the reaction 2 a quinone + NADH + H(+) = 2 a 1,4-benzosemiquinone + NAD(+). The enzyme catalyses N,N-dimethyl-1,4-phenylenediamine + anthranilate + 2 NAD(+) = 2-(4-dimethylaminophenyl)diazenylbenzoate + 2 NADH + 2 H(+). Quinone reductase that provides resistance to thiol-specific stress caused by electrophilic quinones. Shows a preference for naphthoquinones such as plumbagin. Functionally, also exhibits azoreductase activity. Catalyzes the reductive cleavage of the azo bond in aromatic azo compounds to the corresponding amines. Preferred substrates are methyl red, amaranth and p-aminoazobenzene sulfonamide (PAABSA). The chain is FMN-dependent NADH:quinone oxidoreductase 3 from Pseudomonas aeruginosa (strain ATCC 15692 / DSM 22644 / CIP 104116 / JCM 14847 / LMG 12228 / 1C / PRS 101 / PAO1).